A 1007-amino-acid chain; its full sequence is Glutamate receptor ionotropic, delta-2 (1007 aa).

Positions 1 to 23 (MEVFPLLLFLSFCWSRTWDLATA) are cleaved as a signal peptide. Positions 24 to 345 (DSIIHIGAIF…NAFHKKLEDR (322 aa)) are interaction with CBLN1 homotrimer. At 24–566 (DSIIHIGAIF…DMFACLAPFD (543 aa)) the chain is on the extracellular side. Intrachain disulfides connect cysteine 83/cysteine 355, cysteine 99/cysteine 131, and cysteine 298/cysteine 310. Asparagine 293 carries N-linked (GlcNAc...) asparagine glycosylation. Asparagine 426 carries an N-linked (GlcNAc...) asparagine glycan. The Ca(2+) site is built by glutamate 531, valine 534, and aspartate 535. A helical membrane pass occupies residues 567–587 (LSLWACIAGTVLLVGLLVYLL). Residues 588 to 635 (NWLNPPRLQMGSMTSTTLYNSMWFVYGSFVQQGGEVPYTTLATRMMMG) lie on the Cytoplasmic side of the membrane. The helical transmembrane segment at 636 to 656 (AWWLFALIVISSYTANLAAFL) threads the bilayer. Residues 657 to 830 (TITRIESSIQ…QKGGALDIKS (174 aa)) lie on the Extracellular side of the membrane. N-linked (GlcNAc...) asparagine glycans are attached at residues asparagine 713 and asparagine 716. Positions 753, 755, and 757 each coordinate Ca(2+). The chain crosses the membrane as a helical span at residues 831–851 (LAGVFCILAAGIVLSCLIAVL). Topologically, residues 852–1007 (ETWWSRRKGS…GNDPDRGTSI (156 aa)) are cytoplasmic. Serine 883 carries the post-translational modification Phosphoserine. Residue threonine 886 is modified to Phosphothreonine. Serine 890 carries the post-translational modification Phosphoserine. An interaction with AP4M1 region spans residues 921–991 (DFRNTHITTT…MSSIPYQPTP (71 aa)). Positions 1005-1007 (TSI) match the PDZ-binding motif. Phosphoserine is present on serine 1006.

It belongs to the glutamate-gated ion channel (TC 1.A.10.1) family. GRID2 subfamily. As to quaternary structure, tetramer; dimer of dimers. Interacts with EML2, MAGI2 (via PDZ domains) and AP4M1. Interacts with BECN1, GOPC, GRID2IP, SHANK1 and SHANK2. Interacts with CBLN2, but not with CBLN4. Interacts with CBLN1 (via C1q domain); the interaction is CBLN1-NRX1 complex formation-dependent; CBLN1-binding is calcium-independent; CBLN1 hexamers anchor GRID2 N-terminal domain dimers to monomeric NRXN1 isoform beta; promotes synaptogenesis and mediates the D-Serine-dependent long term depression signals and AMPA receptor endocytosis. As to expression, expressed selectively in cerebellar Purkinje cells where it is localized in dendritic spines.

Its subcellular location is the postsynaptic cell membrane. It carries out the reaction Ca(2+)(in) = Ca(2+)(out). It catalyses the reaction Na(+)(in) = Na(+)(out). In terms of biological role, member of the ionotropic glutamate receptor family, which plays a crucial role in synaptic organization and signal transduction in the central nervous system. Although it shares structural features with ionotropic glutamate receptors, does not bind glutamate as a primary ligand. Promotes synaptogenesis and mediates the D-Serine-dependent long term depression signals and AMPA receptor endocytosis of cerebellar parallel fiber-Purkinje cell (PF-PC) synapses through the NRX1B-CBLN1-GRID2 triad complex. In the presence of neurexins and cerebellins, forms cation-selective channels that are proposed to be gated by glycine and D-serine. However, recent research disputes this ligand-gated cation channel activity. Cation-selective ion channel activity can be triggered by GRM1 in Purkinje cells. The polypeptide is Glutamate receptor ionotropic, delta-2 (Grid2) (Mus musculus (Mouse)).